A 153-amino-acid polypeptide reads, in one-letter code: 6,7-dimethyl-8-ribityllumazine synthase (153 aa).

5-amino-6-(D-ribitylamino)uracil-binding positions include phenylalanine 21, 55-57 (AFE), and 79-81 (TVI). (2S)-2-hydroxy-3-oxobutyl phosphate is bound at residue 84 to 85 (AT). Histidine 87 acts as the Proton donor in catalysis. 5-amino-6-(D-ribitylamino)uracil is bound at residue phenylalanine 112. Arginine 126 is a binding site for (2S)-2-hydroxy-3-oxobutyl phosphate.

This sequence belongs to the DMRL synthase family. Forms an icosahedral capsid composed of 60 subunits, arranged as a dodecamer of pentamers.

The enzyme catalyses (2S)-2-hydroxy-3-oxobutyl phosphate + 5-amino-6-(D-ribitylamino)uracil = 6,7-dimethyl-8-(1-D-ribityl)lumazine + phosphate + 2 H2O + H(+). It participates in cofactor biosynthesis; riboflavin biosynthesis; riboflavin from 2-hydroxy-3-oxobutyl phosphate and 5-amino-6-(D-ribitylamino)uracil: step 1/2. In terms of biological role, catalyzes the formation of 6,7-dimethyl-8-ribityllumazine by condensation of 5-amino-6-(D-ribitylamino)uracil with 3,4-dihydroxy-2-butanone 4-phosphate. This is the penultimate step in the biosynthesis of riboflavin. The polypeptide is 6,7-dimethyl-8-ribityllumazine synthase (Bacillus cereus (strain G9842)).